Consider the following 212-residue polypeptide: Large ribosomal subunit protein uL3 (212 aa).

Residue Gln153 is modified to N5-methylglutamine.

Belongs to the universal ribosomal protein uL3 family. Part of the 50S ribosomal subunit. Forms a cluster with proteins L14 and L19. In terms of processing, methylated by PrmB.

One of the primary rRNA binding proteins, it binds directly near the 3'-end of the 23S rRNA, where it nucleates assembly of the 50S subunit. This chain is Large ribosomal subunit protein uL3, found in Dechloromonas aromatica (strain RCB).